Consider the following 596-residue polypeptide: Proteasome-associated ATPase (596 aa).

A coiled-coil region spans residues 12-94 (SRWERETQDL…KEEIDRLAQP (83 aa)). 280–285 (GCGKTL) is an ATP binding site. The interval 595-596 (YL) is docks into pockets in the proteasome alpha-ring.

Belongs to the AAA ATPase family. Homohexamer. Assembles into a hexameric ring structure that caps the 20S proteasome core. Strongly interacts with the prokaryotic ubiquitin-like protein Pup through a hydrophobic interface; the interacting region of ARC lies in its N-terminal coiled-coil domain. There is one Pup binding site per ARC hexamer ring. Upon ATP-binding, the C-terminus of ARC interacts with the alpha-rings of the proteasome core, possibly by binding to the intersubunit pockets.

It participates in protein degradation; proteasomal Pup-dependent pathway. In terms of biological role, ATPase which is responsible for recognizing, binding, unfolding and translocation of pupylated proteins into the bacterial 20S proteasome core particle. May be essential for opening the gate of the 20S proteasome via an interaction with its C-terminus, thereby allowing substrate entry and access to the site of proteolysis. Thus, the C-termini of the proteasomal ATPase may function like a 'key in a lock' to induce gate opening and therefore regulate proteolysis. The sequence is that of Proteasome-associated ATPase from Stackebrandtia nassauensis (strain DSM 44728 / CIP 108903 / NRRL B-16338 / NBRC 102104 / LLR-40K-21).